Consider the following 930-residue polypeptide: Translation initiation factor IF-2 (930 aa).

A compositionally biased stretch (low complexity) spans Phe50–Val67. 2 disordered regions span residues Phe50–Phe196 and Glu260–Pro346. Composition is skewed to basic and acidic residues over residues Ser68–Pro90 and Phe110–Arg125. Residues Lys129 to Arg141 show a composition bias toward low complexity. Composition is skewed to basic and acidic residues over residues Arg157–Gln172 and Val262–Arg295. A compositionally biased stretch (low complexity) spans Asn309 to Asn318. Over residues Val337 to Pro346 the composition is skewed to basic and acidic residues. Residues Glu432–Glu599 enclose the tr-type G domain. The tract at residues Gly441–Thr448 is G1. Gly441–Thr448 serves as a coordination point for GTP. The segment at Gly466–His470 is G2. A G3 region spans residues Asp487–Gly490. GTP contacts are provided by residues Asp487–His491 and Asn541–Asp544. Positions Asn541–Asp544 are G4. The tract at residues Ser577–Lys579 is G5.

This sequence belongs to the TRAFAC class translation factor GTPase superfamily. Classic translation factor GTPase family. IF-2 subfamily.

It is found in the cytoplasm. One of the essential components for the initiation of protein synthesis. Protects formylmethionyl-tRNA from spontaneous hydrolysis and promotes its binding to the 30S ribosomal subunits. Also involved in the hydrolysis of GTP during the formation of the 70S ribosomal complex. This is Translation initiation factor IF-2 from Streptococcus pneumoniae serotype 19F (strain G54).